A 414-amino-acid polypeptide reads, in one-letter code: Phosphoglycerate kinase (414 aa).

9 residues coordinate (2R)-3-phosphoglycerate: Val-23, Asp-24, Phe-25, Asn-26, Arg-39, Ser-62, His-63, Gly-65, and Arg-66. Tyr-75 carries the phosphotyrosine modification. A Phosphoserine modification is found at Ser-76. Positions 121 and 122 each coordinate (2R)-3-phosphoglycerate. A Phosphoserine modification is found at Ser-143. 2 residues coordinate (2R)-3-phosphoglycerate: His-168 and Arg-169. Residues Ser-172, Ser-173, and Ser-183 each carry the phosphoserine modification. Gly-211 is a binding site for ADP. Gly-211 serves as a coordination point for CDP. Ala-212 and Lys-213 together coordinate AMP. Ala-212 contributes to the ATP binding site. Ala-212 contacts Mg(2+). 2 residues coordinate Mg(2+): Ala-215 and Asp-216. Asp-216 contributes to the CDP binding site. Lys-217 lines the AMP pocket. Lys-217 contacts ATP. Residue Gly-235 participates in ADP binding. Gly-235 provides a ligand contact to CDP. Gly-236 provides a ligand contact to AMP. An ATP-binding site is contributed by Gly-236. A phosphoserine mark is found at Ser-253 and Ser-260. A Phosphothreonine modification is found at Thr-299. Gly-310 lines the AMP pocket. Gly-310 serves as a coordination point for ATP. Phosphoserine is present on Ser-328. The CDP site is built by Gly-335, Ala-337, and Phe-340. An ADP-binding site is contributed by Phe-340. Glu-341 is an AMP binding site. Residue Glu-341 participates in ATP binding. Ser-351 carries the post-translational modification Phosphoserine. 2 residues coordinate ATP: Asp-372 and Thr-373. Asp-372 serves as a coordination point for Mg(2+). At Thr-373 the chain carries Phosphothreonine. A phosphoserine mark is found at Ser-387, Ser-390, Ser-412, and Ser-413.

It belongs to the phosphoglycerate kinase family. As to quaternary structure, monomer. Requires Mg(2+) as cofactor.

It is found in the cytoplasm. It localises to the mitochondrion. It catalyses the reaction (2R)-3-phosphoglycerate + ATP = (2R)-3-phospho-glyceroyl phosphate + ADP. The protein operates within carbohydrate degradation; glycolysis; pyruvate from D-glyceraldehyde 3-phosphate: step 2/5. Its function is as follows. Catalyzes one of the two ATP producing reactions in the glycolytic pathway via the reversible conversion of 1,3-diphosphoglycerate to 3-phosphoglycerate. Both L- and D- forms of purine and pyrimidine nucleotides can be used as substrates, but the activity is much lower on pyrimidines. Negatively regulates the biosynthesis of acetyl-CoA from pyruvate in the mitochondrion. The polypeptide is Phosphoglycerate kinase (pgk1) (Schizosaccharomyces pombe (strain 972 / ATCC 24843) (Fission yeast)).